The chain runs to 587 residues: 2-succinyl-5-enolpyruvyl-6-hydroxy-3-cyclohexene-1-carboxylate synthase (587 aa).

This sequence belongs to the TPP enzyme family. MenD subfamily. As to quaternary structure, homodimer. Mg(2+) is required as a cofactor. Mn(2+) serves as cofactor. The cofactor is thiamine diphosphate.

The catalysed reaction is isochorismate + 2-oxoglutarate + H(+) = 5-enolpyruvoyl-6-hydroxy-2-succinyl-cyclohex-3-ene-1-carboxylate + CO2. Its pathway is quinol/quinone metabolism; 1,4-dihydroxy-2-naphthoate biosynthesis; 1,4-dihydroxy-2-naphthoate from chorismate: step 2/7. The protein operates within cofactor biosynthesis; phylloquinone biosynthesis. In terms of biological role, catalyzes the thiamine diphosphate-dependent decarboxylation of 2-oxoglutarate and the subsequent addition of the resulting succinic semialdehyde-thiamine pyrophosphate anion to isochorismate to yield 2-succinyl-5-enolpyruvyl-6-hydroxy-3-cyclohexene-1-carboxylate (SEPHCHC). This chain is 2-succinyl-5-enolpyruvyl-6-hydroxy-3-cyclohexene-1-carboxylate synthase, found in Prochlorococcus marinus (strain MIT 9301).